The sequence spans 369 residues: 3-isopropylmalate dehydrogenase (369 aa).

Position 76–89 (76–89 (GPKWDRNPSHLRPE)) interacts with NAD(+). Arginine 96, arginine 106, arginine 134, and aspartate 223 together coordinate substrate. Positions 223, 247, and 251 each coordinate Mg(2+). NAD(+) is bound at residue 281–293 (GSAPDIAGQNKAN).

The protein belongs to the isocitrate and isopropylmalate dehydrogenases family. LeuB type 1 subfamily. Homodimer. It depends on Mg(2+) as a cofactor. Requires Mn(2+) as cofactor.

It is found in the cytoplasm. The catalysed reaction is (2R,3S)-3-isopropylmalate + NAD(+) = 4-methyl-2-oxopentanoate + CO2 + NADH. It participates in amino-acid biosynthesis; L-leucine biosynthesis; L-leucine from 3-methyl-2-oxobutanoate: step 3/4. In terms of biological role, catalyzes the oxidation of 3-carboxy-2-hydroxy-4-methylpentanoate (3-isopropylmalate) to 3-carboxy-4-methyl-2-oxopentanoate. The product decarboxylates to 4-methyl-2 oxopentanoate. The sequence is that of 3-isopropylmalate dehydrogenase (leuB) from Priestia megaterium (strain DSM 319 / IMG 1521) (Bacillus megaterium).